We begin with the raw amino-acid sequence, 213 residues long: General transcription factor 3C polypeptide 6 (213 aa).

Residues 1-11 (MAAAADERSPE) are compositionally biased toward basic and acidic residues. Disordered stretches follow at residues 1 to 20 (MAAA…EEEE) and 191 to 213 (SGPL…QMLP). At Ala-2 the chain carries N-acetylalanine. Ser-9 bears the Phosphoserine mark.

This sequence belongs to the TFIIIC subunit 6 family. Part of the TFIIIC subcomplex TFIIIC2, consisting of six subunits, GTF3C1, GTF3C2, GTF3C3, GTF3C4, GTF3C5 and GTF3C6. Interacts with GTF3C4 and GTF3C5.

Its subcellular location is the nucleus. In terms of biological role, involved in RNA polymerase III-mediated transcription. Integral, tightly associated component of the DNA-binding TFIIIC2 subcomplex that directly binds tRNA and virus-associated RNA promoters. The polypeptide is General transcription factor 3C polypeptide 6 (GTF3C6) (Homo sapiens (Human)).